The chain runs to 221 residues: Ribonuclease T (221 aa).

The Exonuclease domain maps to 21–195 (VVVDVETAGF…YDAEKTADLF (175 aa)). The Mg(2+) site is built by Asp-24, Glu-26, His-182, and Asp-187. The active-site Proton donor/acceptor is the His-182.

This sequence belongs to the RNase T family. As to quaternary structure, homodimer. Requires Mg(2+) as cofactor.

Functionally, trims short 3' overhangs of a variety of RNA species, leaving a one or two nucleotide 3' overhang. Responsible for the end-turnover of tRNA: specifically removes the terminal AMP residue from uncharged tRNA (tRNA-C-C-A). Also appears to be involved in tRNA biosynthesis. The protein is Ribonuclease T of Marinobacter nauticus (strain ATCC 700491 / DSM 11845 / VT8) (Marinobacter aquaeolei).